The chain runs to 530 residues: Hyccin 2 (530 aa).

Residues Thr-30 and Thr-306 each carry the phosphothreonine modification. A phosphoserine mark is found at Ser-321 and Ser-341. Positions 328–404 (RREGAEGLNG…SNESPRDSVV (77 aa)) are disordered. The span at 353–373 (SGASLSSQPHGTKPPSSSQRG) shows a compositional bias: polar residues. 4 positions are modified to phosphoserine: Ser-430, Ser-442, Ser-444, and Ser-491. The disordered stretch occupies residues 502 to 530 (EGKELLSPGAPLTKQSRSPSFNMQLISQV). The span at 514 to 530 (TKQSRSPSFNMQLISQV) shows a compositional bias: polar residues.

The protein belongs to the Hyccin family. In terms of assembly, component of a phosphatidylinositol 4-kinase (PI4K) complex, composed of PI4KA, EFR3 (EFR3A or EFR3B), TTC7 (TTC7A or TTC7B) and HYCC (HYCC1 or HYCC2). As to expression, expressed in the central nervous system. Expressed at much lower level in oligodendrocytes than in neurons.

The protein localises to the cytoplasm. The protein resides in the cytosol. It localises to the cell membrane. Functionally, component of a complex required to localize phosphatidylinositol 4-kinase (PI4K) to the plasma membrane. The protein is Hyccin 2 (Hycc2) of Mus musculus (Mouse).